Reading from the N-terminus, the 31-residue chain is Cytochrome b6-f complex subunit 6 (31 aa).

Residues 4–26 form a helical membrane-spanning segment; that stretch reads ITSYFGFLLAALTVTSALFIGLS.

Belongs to the PetL family. The 4 large subunits of the cytochrome b6-f complex are cytochrome b6, subunit IV (17 kDa polypeptide, PetD), cytochrome f and the Rieske protein, while the 4 small subunits are PetG, PetL, PetM and PetN. The complex functions as a dimer.

The protein resides in the plastid. It localises to the chloroplast thylakoid membrane. Functionally, component of the cytochrome b6-f complex, which mediates electron transfer between photosystem II (PSII) and photosystem I (PSI), cyclic electron flow around PSI, and state transitions. PetL is important for photoautotrophic growth as well as for electron transfer efficiency and stability of the cytochrome b6-f complex. The polypeptide is Cytochrome b6-f complex subunit 6 (Daucus carota (Wild carrot)).